We begin with the raw amino-acid sequence, 108 residues long: ATP synthase peripheral stalk subunit F6, mitochondrial (108 aa).

A mitochondrion-targeting transit peptide spans 1–32; it reads MILQRLFRFSSVIRSAVSVHLRRNIGVTAVAF. N6-acetyllysine is present on residues Lys-41 and Lys-46. Ser-65 carries the phosphoserine modification. Residue Lys-79 is modified to N6-acetyllysine. Residues Lys-94 and Lys-99 each carry the N6-acetyllysine; alternate modification. Lys-94 and Lys-99 each carry N6-succinyllysine; alternate. Position 105 is an N6-acetyllysine (Lys-105).

This sequence belongs to the eukaryotic ATPase subunit F6 family. Component of the ATP synthase complex composed at least of ATP5F1A/subunit alpha, ATP5F1B/subunit beta, ATP5MC1/subunit c (homooctomer), MT-ATP6/subunit a, MT-ATP8/subunit 8, ATP5ME/subunit e, ATP5MF/subunit f, ATP5MG/subunit g, ATP5MK/subunit k, ATP5MJ/subunit j, ATP5F1C/subunit gamma, ATP5F1D/subunit delta, ATP5F1E/subunit epsilon, ATP5PF/subunit F6, ATP5PB/subunit b, ATP5PD/subunit d, ATP5PO/subunit OSCP. ATP synthase complex consists of a soluble F(1) head domain (subunits alpha(3) and beta(3)) - the catalytic core - and a membrane F(0) domain - the membrane proton channel (subunits c, a, 8, e, f, g, k and j). These two domains are linked by a central stalk (subunits gamma, delta, and epsilon) rotating inside the F1 region and a stationary peripheral stalk (subunits F6, b, d, and OSCP).

It localises to the mitochondrion. The protein localises to the mitochondrion inner membrane. In terms of biological role, subunit F6, of the mitochondrial membrane ATP synthase complex (F(1)F(0) ATP synthase or Complex V) that produces ATP from ADP in the presence of a proton gradient across the membrane which is generated by electron transport complexes of the respiratory chain. ATP synthase complex consist of a soluble F(1) head domain - the catalytic core - and a membrane F(1) domain - the membrane proton channel. These two domains are linked by a central stalk rotating inside the F(1) region and a stationary peripheral stalk. During catalysis, ATP synthesis in the catalytic domain of F(1) is coupled via a rotary mechanism of the central stalk subunits to proton translocation. In vivo, can only synthesize ATP although its ATP hydrolase activity can be activated artificially in vitro. Part of the complex F(0) domain. Part of the complex F(0) domain and the peripheric stalk, which acts as a stator to hold the catalytic alpha(3)beta(3) subcomplex and subunit a/ATP6 static relative to the rotary elements. This is ATP synthase peripheral stalk subunit F6, mitochondrial from Homo sapiens (Human).